The following is a 262-amino-acid chain: DNA repair protein RecO (262 aa).

The protein belongs to the RecO family.

Functionally, involved in DNA repair and RecF pathway recombination. This Enterococcus faecalis (strain ATCC 700802 / V583) protein is DNA repair protein RecO.